The chain runs to 451 residues: D(1A) dopamine receptor (451 aa).

Topologically, residues 1–22 are extracellular; the sequence is MTFNITSMDEDVLLTERESSFR. N-linked (GlcNAc...) asparagine glycosylation is present at asparagine 4. The chain crosses the membrane as a helical span at residues 23–48; sequence VLTGCFLSVLILSTLLGNTLVCAAVI. The Cytoplasmic segment spans residues 49-59; that stretch reads RFRHLRSKVTN. A helical transmembrane segment spans residues 60–86; sequence FFVISLAVSDLLVAVLVMPWKAVAEIA. The Extracellular portion of the chain corresponds to 87–95; sequence GFWPFGTFC. A disulfide bond links cysteine 95 and cysteine 185. The helical transmembrane segment at 96–118 threads the bilayer; that stretch reads NIWVAFDIMCSTASILNLCVISV. Residues 119–137 lie on the Cytoplasmic side of the membrane; it reads DRYWAISSPFRYERKMTPK. A helical transmembrane segment spans residues 138–162; it reads VAFIMIGVAWTLSVLISFIPVQLNW. The Extracellular segment spans residues 163-191; that stretch reads HKAKTTSFFDLNITLHDRTMDNCDSSLNR. A helical transmembrane segment spans residues 192–217; it reads TYAISSSLISFYIPVAIMIVTYTRIY. Residues 218 to 271 are Cytoplasmic-facing; the sequence is RIAAKQIRRISALERAAVHAKNCQNSTSNRNSLDCQQPESSLKTSFKRETKVLK. A helical transmembrane segment spans residues 272–298; sequence TLSVIMGVFVCCWLPFFILNCIVPFCD. Residues 299–315 lie on the Extracellular side of the membrane; it reads PSLTTSGTEPFCISSTT. Residues 316 to 340 form a helical membrane-spanning segment; sequence FDVFVWFGWANSSLNPIIYAFNADF. At 341–451 the chain is on the cytoplasmic side; that stretch reads RKAFSNLLGC…PITQNGQPKT (111 aa). Cysteine 350 is lipidated: S-palmitoyl cysteine.

Belongs to the G-protein coupled receptor 1 family. In terms of tissue distribution, brain.

Its subcellular location is the cell membrane. The protein resides in the cell projection. The protein localises to the cilium membrane. Dopamine receptor whose activity is mediated by G proteins which activate adenylyl cyclase. The protein is D(1A) dopamine receptor (drd1) of Xenopus laevis (African clawed frog).